The chain runs to 536 residues: SNW domain-containing protein 1 (536 aa).

A disordered region spans residues 1–46 (MALTSFLPAPTQLSQDQLEAEEKARSQRSRQTSLVSSRREPPPYGY). Ala-2 carries the post-translational modification N-acetylalanine. Ser-14 carries the phosphoserine modification. Lys-23 is covalently cross-linked (Glycyl lysine isopeptide (Lys-Gly) (interchain with G-Cter in SUMO2)). Residues 59–79 (GDGGAFPEIHVAQYPLDMGRK) are interaction with PPIL1. Residues Lys-81, Lys-97, Lys-115, Lys-122, Lys-141, Lys-158, and Lys-170 each participate in a glycyl lysine isopeptide (Lys-Gly) (interchain with G-Cter in SUMO2) cross-link. The tract at residues 174-339 (AQYIRYTPSQ…KARERRAGIK (166 aa)) is SNW. 2 positions are modified to phosphoserine: Ser-182 and Ser-190. A Glycyl lysine isopeptide (Lys-Gly) (interchain with G-Cter in SUMO2) cross-link involves residue Lys-193. The segment at 209–233 (PPRFKINKKIPRGPPSPPAPVMHSP) is disordered. 3 positions are modified to phosphoserine: Ser-224, Ser-232, and Ser-234. Glycyl lysine isopeptide (Lys-Gly) (interchain with G-Cter in SUMO2) cross-links involve residues Lys-240, Lys-258, Lys-286, Lys-339, Lys-344, Lys-416, Lys-441, and Lys-452. Positions 311-386 (KMAQKEKEKH…RSKLQRNENR (76 aa)) are disordered. Composition is skewed to basic and acidic residues over residues 472–489 (FVPDKEFSGSDRRQRGRE) and 503–530 (KFLEEAKQHGGSKRPSDSSRPKEHEHEG). The segment at 472 to 536 (FVPDKEFSGS…EHEGKKRRKE (65 aa)) is disordered. Phosphoserine is present on residues Ser-479 and Ser-481. Lys-509 participates in a covalent cross-link: Glycyl lysine isopeptide (Lys-Gly) (interchain with G-Cter in SUMO2).

The protein belongs to the SNW family. In terms of assembly, identified in the spliceosome C complex. Associates with U4/U6-U5 tri-small nuclear ribonucleoproteins (U4/U6-U5 tri-snRNPs). Component of the minor spliceosome, which splices U12-type introns. Interacts with SKI, SMAD2,SMAD3, RBPJ, RB1, PABPN1, MAGEA1, SIRT1, FOXN3, U2AF2, PPIL1, DAXX and ATP1B4. Interacts with VDR and RXRA; preferentially associates with VDR:RXRA heterodimers. Interacts with NCOR2. Interacts with MAML1. Interacts with NOTCH1 NICD; the interaction involves multimerized NOTCH1 NICD. Forms a complex with NOTCH1 NICD and MAML1; the association is dissociated by RBPJ. Associates with positive transcription elongation factor b (P-TEFb). Component of the SNARP complex which consists at least of SNIP1, SNW1, THRAP3, BCLAF1 and PNN.

Its subcellular location is the nucleus. Functionally, involved in pre-mRNA splicing as component of the spliceosome. As a component of the minor spliceosome, involved in the splicing of U12-type introns in pre-mRNAs. Required in the specific splicing of CDKN1A pre-mRNA; the function probably involves the recruitment of U2AF2 to the mRNA. May recruit PPIL1 to the spliceosome. May be involved in cyclin-D1/CCND1 mRNA stability through the SNARP complex which associates with both the 3'end of the CCND1 gene and its mRNA. Involved in transcriptional regulation. Modulates TGF-beta-mediated transcription via association with SMAD proteins, MYOD1-mediated transcription via association with PABPN1, RB1-mediated transcriptional repression, and retinoid-X receptor (RXR)- and vitamin D receptor (VDR)-dependent gene transcription in a cell line-specific manner probably involving coactivators NCOA1 and GRIP1. Is involved in NOTCH1-mediated transcriptional activation. Binds to multimerized forms of Notch intracellular domain (NICD) and is proposed to recruit transcriptional coactivators such as MAML1 to form an intermediate preactivation complex which associates with DNA-bound CBF-1/RBPJ to form a transcriptional activation complex by releasing SNW1 and redundant NOTCH1 NICD. In Bos taurus (Bovine), this protein is SNW domain-containing protein 1 (SNW1).